Here is a 921-residue protein sequence, read N- to C-terminus: cGMP-dependent 3',5'-cyclic phosphodiesterase (921 aa).

Methionine 1 carries the post-translational modification N-acetylmethionine. Disordered regions lie at residues 1-21 and 177-198; these read MRRQ…PPGS and ESSV…DQKG. Residues 177–188 show a composition bias toward polar residues; that stretch reads ESSVAPEATQNP. 2 GAF domains span residues 220-357 and 389-528; these read DASS…STVL and DVSV…GISI. Residues serine 411, aspartate 426, isoleucine 445, tyrosine 468, and threonine 479 each contribute to the 3',5'-cyclic GMP site. The region spanning 558–882 is the PDEase domain; it reads SDDEYTKLLH…EHWTKVSHKF (325 aa). The Proton donor role is filled by histidine 636. Zn(2+) contacts are provided by histidine 640, histidine 676, aspartate 677, and aspartate 788. Residue aspartate 677 coordinates Mg(2+).

This sequence belongs to the cyclic nucleotide phosphodiesterase family. PDE2 subfamily. In terms of assembly, homodimer. Zn(2+) serves as cofactor. The cofactor is Mg(2+).

It is found in the cell membrane. The protein localises to the cytoplasm. Its subcellular location is the mitochondrion. The protein resides in the mitochondrion inner membrane. It localises to the mitochondrion outer membrane. The catalysed reaction is a nucleoside 3',5'-cyclic phosphate + H2O = a nucleoside 5'-phosphate + H(+). The enzyme catalyses 3',5'-cyclic GMP + H2O = GMP + H(+). It carries out the reaction 3',5'-cyclic AMP + H2O = AMP + H(+). With respect to regulation, the 3',5'-cyclic-AMP phosphodiesterase activity is stimulated by 3',5'-cyclic GMP. In terms of biological role, cGMP-activated cyclic nucleotide phosphodiesterase with a dual-specificity for the second messengers cAMP and cGMP, which are key regulators of many important physiological processes. Has a higher efficiency with cGMP compared to cAMP. Plays a role in cell growth and migration. Its function is as follows. Regulates mitochondrial cAMP levels and respiration. Involved in the regulation of mitochondria morphology/dynamics and apoptotic cell death via local modulation of cAMP/PKA signaling in the mitochondrion, including the monitoring of local cAMP levels at the outer mitochondrial membrane and of PKA-dependent phosphorylation of DNM1L. The chain is cGMP-dependent 3',5'-cyclic phosphodiesterase from Bos taurus (Bovine).